A 273-amino-acid polypeptide reads, in one-letter code: Phosphate import ATP-binding protein PstB (273 aa).

Residues 26-268 form the ABC transporter domain; that stretch reads MRGEKVCVFY…PTEKRTQDYI (243 aa). Residue 58–65 participates in ATP binding; the sequence is GPSGCGKS.

It belongs to the ABC transporter superfamily. Phosphate importer (TC 3.A.1.7) family. As to quaternary structure, the complex is composed of two ATP-binding proteins (PstB), two transmembrane proteins (PstC and PstA) and a solute-binding protein (PstS).

Its subcellular location is the cell inner membrane. The catalysed reaction is phosphate(out) + ATP + H2O = ADP + 2 phosphate(in) + H(+). Functionally, part of the ABC transporter complex PstSACB involved in phosphate import. Responsible for energy coupling to the transport system. This chain is Phosphate import ATP-binding protein PstB, found in Brucella abortus (strain 2308).